A 198-amino-acid polypeptide reads, in one-letter code: HTH-type transcriptional regulator BetI (198 aa).

Positions 8-68 (PLRRRELIDA…ATMRHLLREL (61 aa)) constitute an HTH tetR-type domain. Residues 31–50 (TVAQIAHEAGVSPALAHHYF) constitute a DNA-binding region (H-T-H motif).

Its pathway is amine and polyamine biosynthesis; betaine biosynthesis via choline pathway [regulation]. In terms of biological role, repressor involved in the biosynthesis of the osmoprotectant glycine betaine. It represses transcription of the choline transporter BetT and the genes of BetAB involved in the synthesis of glycine betaine. The protein is HTH-type transcriptional regulator BetI of Brucella melitensis biotype 2 (strain ATCC 23457).